Consider the following 240-residue polypeptide: UDP-2,3-diacylglucosamine hydrolase (240 aa).

Mn(2+) contacts are provided by D8, H10, D41, N79, and H114. 79-80 (NR) serves as a coordination point for substrate. Residues D122, S160, N164, K167, and H195 each coordinate substrate. Mn(2+) is bound by residues H195 and H197.

It belongs to the LpxH family. Mn(2+) is required as a cofactor.

The protein resides in the cell inner membrane. The catalysed reaction is UDP-2-N,3-O-bis[(3R)-3-hydroxytetradecanoyl]-alpha-D-glucosamine + H2O = 2-N,3-O-bis[(3R)-3-hydroxytetradecanoyl]-alpha-D-glucosaminyl 1-phosphate + UMP + 2 H(+). It functions in the pathway glycolipid biosynthesis; lipid IV(A) biosynthesis; lipid IV(A) from (3R)-3-hydroxytetradecanoyl-[acyl-carrier-protein] and UDP-N-acetyl-alpha-D-glucosamine: step 4/6. Functionally, hydrolyzes the pyrophosphate bond of UDP-2,3-diacylglucosamine to yield 2,3-diacylglucosamine 1-phosphate (lipid X) and UMP by catalyzing the attack of water at the alpha-P atom. Involved in the biosynthesis of lipid A, a phosphorylated glycolipid that anchors the lipopolysaccharide to the outer membrane of the cell. The sequence is that of UDP-2,3-diacylglucosamine hydrolase from Escherichia coli O127:H6 (strain E2348/69 / EPEC).